The sequence spans 550 residues: Protein UshA (550 aa).

A signal peptide spans 1-25 (MRFSLSTTAAALAVSLAFAPGWAVA). D41, H43, D84, N116, H217, H252, and Q254 together coordinate a divalent metal cation. Cysteines 258 and 275 form a disulfide. Substrate contacts are provided by residues 375–379 (RSKVR) and 498–504 (FNALGGD).

Belongs to the 5'-nucleotidase family. Co(2+) serves as cofactor.

The protein resides in the periplasm. It carries out the reaction UDP-sugar + H2O = UMP + alpha-D-aldose 1-phosphate.. The enzyme catalyses a ribonucleoside 5'-phosphate + H2O = a ribonucleoside + phosphate. Its function is as follows. Degradation of external UDP-glucose to uridine monophosphate and glucose-1-phosphate, which can then be used by the cell. This is Protein UshA (ushA) from Yersinia enterocolitica serotype O:8 / biotype 1B (strain NCTC 13174 / 8081).